Here is a 112-residue protein sequence, read N- to C-terminus: MVFLREKEGPSGGSGRRIILWPAYFDSTLPRRLGRRVPRDMGVPSPKPEDVAEAARRAGFEAVVEESSYPRLWWRVRRRIVVLAPEDVSKTDIIKAVATELRKIAAARRKRS.

This sequence belongs to the SRP19 family. Part of the signal recognition particle protein translocation system, which is composed of SRP and FtsY. Archaeal SRP consists of a 7S RNA molecule of 300 nucleotides and two protein subunits: SRP54 and SRP19.

Its subcellular location is the cytoplasm. Functionally, involved in targeting and insertion of nascent membrane proteins into the cytoplasmic membrane. Binds directly to 7S RNA and mediates binding of the 54 kDa subunit of the SRP. In Aeropyrum pernix (strain ATCC 700893 / DSM 11879 / JCM 9820 / NBRC 100138 / K1), this protein is Signal recognition particle 19 kDa protein.